Here is a 191-residue protein sequence, read N- to C-terminus: MSLISRLKAVVAGDDYLDDDFDELDYASEDELNGVNDYKENRKNSNALSNSNPFDFMNNNRSSNVVGMPGISNSSSEVSLMEPRSFDEMPQAIQALRERKTVILNLTMMDPDQAQRAVDFVAGGTYAIDGHQERVGESIFLFAPSCVNVTSSFPEEVSPSNISSKKTSPYSLETNTTPEPAWGESKLSAFS.

Positions 153–178 (FPEEVSPSNISSKKTSPYSLETNTTP) are enriched in polar residues. Residues 153–191 (FPEEVSPSNISSKKTSPYSLETNTTPEPAWGESKLSAFS) form a disordered region.

Belongs to the SepF family. In terms of assembly, homodimer. Interacts with FtsZ.

It localises to the cytoplasm. Cell division protein that is part of the divisome complex and is recruited early to the Z-ring. Probably stimulates Z-ring formation, perhaps through the cross-linking of FtsZ protofilaments. Its function overlaps with FtsA. This Prochlorococcus marinus (strain MIT 9515) protein is Cell division protein SepF.